The chain runs to 368 residues: 3-dehydroquinate synthase (368 aa).

NAD(+) is bound by residues Asp-71–Lys-76, Gly-105–Asp-109, Thr-129–Thr-130, Lys-142, Lys-151, and Thr-169–Thr-172. The Zn(2+) site is built by Glu-184, His-247, and His-264.

It belongs to the sugar phosphate cyclases superfamily. Dehydroquinate synthase family. NAD(+) is required as a cofactor. It depends on Co(2+) as a cofactor. The cofactor is Zn(2+).

Its subcellular location is the cytoplasm. The catalysed reaction is 7-phospho-2-dehydro-3-deoxy-D-arabino-heptonate = 3-dehydroquinate + phosphate. It participates in metabolic intermediate biosynthesis; chorismate biosynthesis; chorismate from D-erythrose 4-phosphate and phosphoenolpyruvate: step 2/7. Catalyzes the conversion of 3-deoxy-D-arabino-heptulosonate 7-phosphate (DAHP) to dehydroquinate (DHQ). This chain is 3-dehydroquinate synthase, found in Ralstonia nicotianae (strain ATCC BAA-1114 / GMI1000) (Ralstonia solanacearum).